The primary structure comprises 349 residues: tRNA-specific 2-thiouridylase MnmA (349 aa).

Residues 6 to 13 (LLSGGVDS) and Met-32 each bind ATP. The Nucleophile role is filled by Cys-103. Cys-103 and Cys-195 are disulfide-bonded. Gly-127 contributes to the ATP binding site. The tract at residues 145–147 (KDQ) is interaction with tRNA. Residue Cys-195 is the Cysteine persulfide intermediate of the active site.

The protein belongs to the MnmA/TRMU family.

Its subcellular location is the cytoplasm. It catalyses the reaction S-sulfanyl-L-cysteinyl-[protein] + uridine(34) in tRNA + AH2 + ATP = 2-thiouridine(34) in tRNA + L-cysteinyl-[protein] + A + AMP + diphosphate + H(+). Its function is as follows. Catalyzes the 2-thiolation of uridine at the wobble position (U34) of tRNA, leading to the formation of s(2)U34. This is tRNA-specific 2-thiouridylase MnmA from Pseudothermotoga lettingae (strain ATCC BAA-301 / DSM 14385 / NBRC 107922 / TMO) (Thermotoga lettingae).